Here is a 38-residue protein sequence, read N- to C-terminus: Large ribosomal subunit protein bL36 (38 aa).

Belongs to the bacterial ribosomal protein bL36 family.

This Myxococcus xanthus (strain DK1622) protein is Large ribosomal subunit protein bL36.